Consider the following 391-residue polypeptide: DNA repair protein NreB (391 aa).

A C4-type zinc finger spans residues 3–17 (CIECRGRMLCSRKVC). The PIP motif motif lies at 384–391 (QRTLWEFM).

Belongs to the Nre family. Interacts with the DNA polymerase sliding clamp (PCNA) via the PIP (PCNA-interacting peptide) motif.

Functionally, involved in DNA damage repair. In Archaeoglobus fulgidus (strain ATCC 49558 / DSM 4304 / JCM 9628 / NBRC 100126 / VC-16), this protein is DNA repair protein NreB.